Reading from the N-terminus, the 488-residue chain is Palmitoleoyl-protein carboxylesterase notum1' (488 aa).

Residues 1–19 (MAGTLCVTLLLLLSTIAVG) form the signal peptide. Asparagine 90 is a glycosylation site (N-linked (GlcNAc...) asparagine). Residues serine 226, aspartate 334, and histidine 383 each act as charge relay system in the active site.

The protein belongs to the pectinacetylesterase family. Notum subfamily. In terms of tissue distribution, expressed in the egg and through cleavage to gastrulation stages. Enriched in the animal (prospective ectoderm) and dorsal regions in early gastrula. Shows a dynamic expression during embryogenesis, in particular during neural induction and antero-posterior (AP) patterning.

It is found in the secreted. The enzyme catalyses [Wnt protein]-O-(9Z)-hexadecenoyl-L-serine + H2O = [Wnt protein]-L-serine + (9Z)-hexadecenoate + H(+). Its function is as follows. Carboxylesterase that acts as a key negative regulator of the Wnt signaling pathway by specifically mediating depalmitoleoylation of WNT proteins. Serine palmitoleoylation of WNT proteins is required for efficient binding to frizzled receptors. Functions in the prospective ectoderm and is required for neural induction. This Xenopus laevis (African clawed frog) protein is Palmitoleoyl-protein carboxylesterase notum1'.